An 83-amino-acid polypeptide reads, in one-letter code: Mitochondrial import inner membrane translocase subunit Tim8 B (83 aa).

A2 is modified (N-acetylalanine). The Twin CX3C motif motif lies at 36 to 59; it reads CWDKCVEKPGNRLDSRTENCLSSC. 2 cysteine pairs are disulfide-bonded: C36–C59 and C40–C55.

Belongs to the small Tim family. As to quaternary structure, heterohexamer; possibly composed of 3 copies of TIMM8B and 3 copies of TIMM13, named soluble 70 kDa complex. Associates with the TIM22 complex, whose core is composed of TIMM22.

It is found in the mitochondrion inner membrane. Functionally, probable mitochondrial intermembrane chaperone that participates in the import and insertion of some multi-pass transmembrane proteins into the mitochondrial inner membrane. Also required for the transfer of beta-barrel precursors from the TOM complex to the sorting and assembly machinery (SAM complex) of the outer membrane. Acts as a chaperone-like protein that protects the hydrophobic precursors from aggregation and guide them through the mitochondrial intermembrane space. This Bos taurus (Bovine) protein is Mitochondrial import inner membrane translocase subunit Tim8 B (TIMM8B).